The sequence spans 176 residues: Crossover junction endodeoxyribonuclease RuvC (176 aa).

Catalysis depends on residues D7, E67, and D139. The Mg(2+) site is built by D7, E67, and D139.

It belongs to the RuvC family. As to quaternary structure, homodimer which binds Holliday junction (HJ) DNA. The HJ becomes 2-fold symmetrical on binding to RuvC with unstacked arms; it has a different conformation from HJ DNA in complex with RuvA. In the full resolvosome a probable DNA-RuvA(4)-RuvB(12)-RuvC(2) complex forms which resolves the HJ. It depends on Mg(2+) as a cofactor.

The protein resides in the cytoplasm. It carries out the reaction Endonucleolytic cleavage at a junction such as a reciprocal single-stranded crossover between two homologous DNA duplexes (Holliday junction).. Functionally, the RuvA-RuvB-RuvC complex processes Holliday junction (HJ) DNA during genetic recombination and DNA repair. Endonuclease that resolves HJ intermediates. Cleaves cruciform DNA by making single-stranded nicks across the HJ at symmetrical positions within the homologous arms, yielding a 5'-phosphate and a 3'-hydroxyl group; requires a central core of homology in the junction. The consensus cleavage sequence is 5'-(A/T)TT(C/G)-3'. Cleavage occurs on the 3'-side of the TT dinucleotide at the point of strand exchange. HJ branch migration catalyzed by RuvA-RuvB allows RuvC to scan DNA until it finds its consensus sequence, where it cleaves and resolves the cruciform DNA. This is Crossover junction endodeoxyribonuclease RuvC from Pelobacter propionicus (strain DSM 2379 / NBRC 103807 / OttBd1).